Consider the following 290-residue polypeptide: Multiple sugar-binding transport system permease protein MsmF (290 aa).

The next 7 helical transmembrane spans lie at 12-32, 72-92, 104-124, 156-176, 201-221, 231-253, and 260-280; these read GWTFLIVPLILQVVFFYFPMF, FTLVLTLALIVGEIVLGIIIA, FFRAWFFFPAVLSGLTVSLIF, VIASIFVLLWQGVAMPIILFL, FWSVELPYLLPSISMVFIMAL, IFALTGGGPNNSTTSLGLLVYNY, and YGYANAIALILFIIIGIVSVL. Positions 70–281 constitute an ABC transmembrane type-1 domain; it reads IGFTLVLTLA…IIIGIVSVLQ (212 aa).

The protein belongs to the binding-protein-dependent transport system permease family. MalFG subfamily.

The protein localises to the cell membrane. Involved in a binding protein-dependent transport system responsible for the uptake of melibiose, raffinose and isomaltotriose. The sequence is that of Multiple sugar-binding transport system permease protein MsmF (msmF) from Streptococcus mutans serotype c (strain ATCC 700610 / UA159).